The following is a 242-amino-acid chain: Protein HTATIP2 (242 aa).

N-acetylalanine is present on Ala2. The tract at residues 2–25 (AETEALSKLREDFRMQNKSVFILG) is required for interaction with elongation factor EEF1A1. The NADPH site is built by Ser27, Gly28, Glu29, Thr30, Arg52, Arg53, Leu92, Gly93, Tyr143, Lys147, Leu170, and Arg178. Tyr143 acts as the Proton acceptor in catalysis. Lys147 is a catalytic residue.

Monomer. Forms homodimers during oxidative stress. Interacts (via N-terminus) with elongation factor EEF1A1 (via middle-region); the interaction is direct and competes with EEF1A1 binding to guanyl-nucleotide exchange factor EEF1B2, thereby inhibiting GDP for GTP exchange and reactivation of EEF1A1. Interacts with nuclear transport receptors XPO4, IPO5/RANBP5, IPO7, IPO9 and KPNB1 as well as GCN1L1/GCN1 and LRPPRC probably through their HEAT repeats. Binds NCOA5/CIA. In terms of assembly, interacts (via N-terminus) with proteasome subunit PSMD4/s5a. As to quaternary structure, (Microbial infection) Interacts with HIV-1 Tat (via activation domain). In terms of tissue distribution, high levels in liver, lung, skeletal muscle, pancreas and placenta. Moderate levels in heart and kidney. Low levels in brain. Not expressed or low levels in variant small cell lung carcinomas, 33% of hepatocellular carcinomas and neuroblastomas. Levels are reduced in the heart of patients with hypertrophic cardiomyopathy and failing hearts.

Its subcellular location is the cytoplasm. Represses translation by preventing reactivation of elongation factor eEF1A. May also inhibit nuclear import by competing with nuclear import substrates for binding to a subset of nuclear transport receptors. Has additionally been proposed to act as a redox sensor involved in cellular oxidative stress surveillance. The protein is Protein HTATIP2 of Homo sapiens (Human).